A 251-amino-acid chain; its full sequence is Uroporphyrinogen-III C-methyltransferase (251 aa).

S-adenosyl-L-homocysteine is bound by residues Pro-17, 93-95 (GGD), 123-124 (TS), Met-177, and Ala-206.

The protein belongs to the precorrin methyltransferase family.

Its subcellular location is the plastid. It is found in the chloroplast. It catalyses the reaction uroporphyrinogen III + 2 S-adenosyl-L-methionine = precorrin-2 + 2 S-adenosyl-L-homocysteine + H(+). It participates in cofactor biosynthesis; adenosylcobalamin biosynthesis; precorrin-2 from uroporphyrinogen III: step 1/1. It functions in the pathway porphyrin-containing compound metabolism; siroheme biosynthesis; precorrin-2 from uroporphyrinogen III: step 1/1. Catalyzes the two successive C-2 and C-7 methylation reactions involved in the conversion of uroporphyrinogen III to precorrin-2 via the intermediate formation of precorrin-1. It is a step in the biosynthesis of both cobalamin (vitamin B12) and siroheme. The protein is Uroporphyrinogen-III C-methyltransferase (cobA) of Cyanidium caldarium (Red alga).